The primary structure comprises 113 residues: Nucleoid-associated protein Cthe_2143 (113 aa).

Belongs to the YbaB/EbfC family. In terms of assembly, homodimer.

It is found in the cytoplasm. The protein localises to the nucleoid. Functionally, binds to DNA and alters its conformation. May be involved in regulation of gene expression, nucleoid organization and DNA protection. The protein is Nucleoid-associated protein Cthe_2143 of Acetivibrio thermocellus (strain ATCC 27405 / DSM 1237 / JCM 9322 / NBRC 103400 / NCIMB 10682 / NRRL B-4536 / VPI 7372) (Clostridium thermocellum).